We begin with the raw amino-acid sequence, 273 residues long: Translation initiation factor IF-3, mitochondrial (273 aa).

A mitochondrion-targeting transit peptide spans 1 to 32 (MAALFLKKLTLQTVKTENYCIRRCLGKYILQG). The propeptide at 33–92 (PAPTQQPPRPSCLIHAKAFSTEDTQDEMTKKKKNETAFSSVGRKINERIIHVLDEQGNDL) is removed in mature form. The tract at residues 242–273 (EEAAWKAAPDTPRRDALNGGDGKDGASGVLPQ) is disordered. The segment covering 252–265 (TPRRDALNGGDGKD) has biased composition (basic and acidic residues).

Belongs to the IF-3 family.

The protein resides in the mitochondrion. Functionally, IF-3 binds to the 28S ribosomal subunit and shifts the equilibrium between 55S ribosomes and their 39S and 28S subunits in favor of the free subunits, thus enhancing the availability of 28S subunits on which protein synthesis initiation begins. The protein is Translation initiation factor IF-3, mitochondrial (MTIF3) of Bos taurus (Bovine).